Here is a 502-residue protein sequence, read N- to C-terminus: Probable cytosol aminopeptidase (502 aa).

The Mn(2+) site is built by Lys269 and Asp274. Lys281 is an active-site residue. Residues Asp292, Asp351, and Glu353 each coordinate Mn(2+). Residue Arg355 is part of the active site.

The protein belongs to the peptidase M17 family. The cofactor is Mn(2+).

The protein localises to the cytoplasm. It carries out the reaction Release of an N-terminal amino acid, Xaa-|-Yaa-, in which Xaa is preferably Leu, but may be other amino acids including Pro although not Arg or Lys, and Yaa may be Pro. Amino acid amides and methyl esters are also readily hydrolyzed, but rates on arylamides are exceedingly low.. It catalyses the reaction Release of an N-terminal amino acid, preferentially leucine, but not glutamic or aspartic acids.. Functionally, presumably involved in the processing and regular turnover of intracellular proteins. Catalyzes the removal of unsubstituted N-terminal amino acids from various peptides. The polypeptide is Probable cytosol aminopeptidase (Vibrio vulnificus (strain CMCP6)).